We begin with the raw amino-acid sequence, 78 residues long: Molt-inhibiting hormone (78 aa).

Disulfide bonds link cysteine 7–cysteine 44, cysteine 24–cysteine 40, and cysteine 27–cysteine 53.

The protein resides in the secreted. Functionally, inhibits Y-organs where molting hormone (ecdysteroid) is secreted. A molting cycle is initiated when MIH secretion diminishes or stops. Also has significant hyperglycemic hormone (CHH) activity. The protein is Molt-inhibiting hormone of Cancer pagurus (Rock crab).